We begin with the raw amino-acid sequence, 1342 residues long: DNA-directed RNA polymerase subunit beta (1342 aa).

It belongs to the RNA polymerase beta chain family. As to quaternary structure, the RNAP catalytic core consists of 2 alpha, 1 beta, 1 beta' and 1 omega subunit. When a sigma factor is associated with the core the holoenzyme is formed, which can initiate transcription.

The catalysed reaction is RNA(n) + a ribonucleoside 5'-triphosphate = RNA(n+1) + diphosphate. Functionally, DNA-dependent RNA polymerase catalyzes the transcription of DNA into RNA using the four ribonucleoside triphosphates as substrates. The protein is DNA-directed RNA polymerase subunit beta of Yersinia pseudotuberculosis serotype O:1b (strain IP 31758).